A 349-amino-acid polypeptide reads, in one-letter code: Green-sensitive opsin-2 (349 aa).

The Extracellular portion of the chain corresponds to Met-1–Gln-36. Residues Asn-2 and Asn-15 are each glycosylated (N-linked (GlcNAc...) asparagine). Residues Phe-37–Val-61 traverse the membrane as a helical segment. Residues Thr-62–Asn-73 are Cytoplasmic-facing. Residues Tyr-74 to Ile-99 form a helical membrane-spanning segment. At Asn-100–Glu-113 the chain is on the extracellular side. Cys-110 and Cys-187 form a disulfide bridge. A helical membrane pass occupies residues Gly-114–Ile-133. At Glu-134–His-152 the chain is on the cytoplasmic side. The helical transmembrane segment at Ala-153–Ser-176 threads the bilayer. Over Arg-177 to Ser-202 the chain is Extracellular. Residue Asn-200 is glycosylated (N-linked (GlcNAc...) asparagine). Residues Tyr-203–Val-230 form a helical membrane-spanning segment. The Cytoplasmic segment spans residues Lys-231–Arg-252. A helical transmembrane segment spans residues Met-253–Phe-276. At Phe-277 to Ser-284 the chain is on the extracellular side. A helical membrane pass occupies residues Ala-285–Leu-309. At Lys-296 the chain carries N6-(retinylidene)lysine. Residues Asn-310 to Ala-349 are Cytoplasmic-facing. Residues Leu-328–Ala-349 form a disordered region. Residues Ser-334–Ala-349 are compositionally biased toward low complexity.

The protein belongs to the G-protein coupled receptor 1 family. Opsin subfamily. In terms of processing, phosphorylated on some or all of the serine and threonine residues present in the C-terminal region.

The protein localises to the membrane. In terms of biological role, visual pigments are the light-absorbing molecules that mediate vision. They consist of an apoprotein, opsin, covalently linked to cis-retinal. The protein is Green-sensitive opsin-2 (opn1mw2) of Danio rerio (Zebrafish).